We begin with the raw amino-acid sequence, 360 residues long: Phospho-N-acetylmuramoyl-pentapeptide-transferase (360 aa).

Residues 1 to 25 are Periplasmic-facing; the sequence is MLVWLAEHLVKYYSGFNVFSYLTFR. A helical transmembrane segment spans residues 26-46; it reads AIVSLLTALFISLWMGPRMIA. Residues 47–71 lie on the Cytoplasmic side of the membrane; that stretch reads HLQKLSFGQVVRNDGPESHFSKRGT. Residues 72–92 traverse the membrane as a helical segment; it reads PTMGGIMILTAIVISVLLWAY. Position 93 (Pro-93) is a topological domain, periplasmic. Residues 94 to 114 traverse the membrane as a helical segment; it reads SNPYVWCVLVVLVGYGVIGFV. Residues 115 to 131 are Cytoplasmic-facing; it reads DDYRKVVRKDTKGLIAR. Residues 132-152 form a helical membrane-spanning segment; that stretch reads WKYFWMSVIALGVAFALYLVG. At 153-167 the chain is on the periplasmic side; sequence KDTPATQLVVPFFKD. Residues 168–188 form a helical membrane-spanning segment; it reads VMPQLGLFYILLAYFVIVGTG. Over 189–198 the chain is Cytoplasmic; it reads NAVNLTDGLD. Residues 199–219 traverse the membrane as a helical segment; it reads GLAIMPTVFVAGGFALVAWAT. Over 220 to 235 the chain is Periplasmic; sequence GNMNFASYLHIPYLRH. Residues 236–256 form a helical membrane-spanning segment; the sequence is AGELVIVCTAIVGAGLGFLWF. Topologically, residues 257–262 are cytoplasmic; sequence NTYPAQ. The helical transmembrane segment at 263-283 threads the bilayer; that stretch reads VFMGDVGSLALGGALGIIAVL. Residues 284 to 287 lie on the Periplasmic side of the membrane; that stretch reads LRQE. The helical transmembrane segment at 288 to 308 threads the bilayer; the sequence is FLLVIMGGVFVVETLSVILQV. Residues 309 to 337 lie on the Cytoplasmic side of the membrane; that stretch reads GSFKLRGQRIFRMAPIHHHYELKGWPEPR. The chain crosses the membrane as a helical span at residues 338-358; the sequence is VIVRFWIISLMLVLIGLATLK. Residues 359–360 lie on the Periplasmic side of the membrane; that stretch reads VR.

This sequence belongs to the glycosyltransferase 4 family. MraY subfamily. Mg(2+) serves as cofactor.

The protein resides in the cell inner membrane. It catalyses the reaction UDP-N-acetyl-alpha-D-muramoyl-L-alanyl-gamma-D-glutamyl-meso-2,6-diaminopimeloyl-D-alanyl-D-alanine + di-trans,octa-cis-undecaprenyl phosphate = di-trans,octa-cis-undecaprenyl diphospho-N-acetyl-alpha-D-muramoyl-L-alanyl-D-glutamyl-meso-2,6-diaminopimeloyl-D-alanyl-D-alanine + UMP. It functions in the pathway cell wall biogenesis; peptidoglycan biosynthesis. Functionally, catalyzes the initial step of the lipid cycle reactions in the biosynthesis of the cell wall peptidoglycan: transfers peptidoglycan precursor phospho-MurNAc-pentapeptide from UDP-MurNAc-pentapeptide onto the lipid carrier undecaprenyl phosphate, yielding undecaprenyl-pyrophosphoryl-MurNAc-pentapeptide, known as lipid I. The protein is Phospho-N-acetylmuramoyl-pentapeptide-transferase of Escherichia coli O157:H7.